Consider the following 217-residue polypeptide: Large ribosomal subunit protein uL3 (217 aa).

Belongs to the universal ribosomal protein uL3 family. In terms of assembly, part of the 50S ribosomal subunit. Forms a cluster with proteins L14 and L19.

One of the primary rRNA binding proteins, it binds directly near the 3'-end of the 23S rRNA, where it nucleates assembly of the 50S subunit. The chain is Large ribosomal subunit protein uL3 from Mycobacterium leprae (strain TN).